We begin with the raw amino-acid sequence, 200 residues long: Coiled-coil domain-containing protein 28B (200 aa).

The residue at position 1 (Met-1) is an N-acetylmethionine. Over residues 1-10 (MEDKKKKRSP) the composition is skewed to basic residues. Residues 1–49 (MEDKKKKRSPKPCLTQPAQAPGTLRRVPVPTSHSGSLALGLPHLPSPKQ) form a disordered region. Phosphoserine occurs at positions 46 and 115. The segment covering 140-152 (GEEEDEEEEEDGV) has biased composition (acidic residues). A disordered region spans residues 140 to 165 (GEEEDEEEEEDGVTEGLPEEQKKTMA). The stretch at 158–189 (EEQKKTMADRNLDQLLSNLEDLSNSIQKLHLA) forms a coiled coil.

Interacts with BBS1, BBS2, BBS4, BBS5, BBS6, BBS7 and TTC8/BBS8. Interacts with MAPKAP1/SIN1 isoform 1 and RICTOR. As to expression, expressed in the retina, pericardium and limb epithelium.

The protein localises to the cytoplasm. It is found in the cytoskeleton. The protein resides in the microtubule organizing center. Its subcellular location is the centrosome. Functionally, involved in ciliogenesis. Regulates cilia length through its interaction with MAPKAP1/SIN1 but independently of mTORC2 complex. Modulates mTORC2 complex assembly and function, possibly enhances AKT1 phosphorylation. Does not seem to modulate assembly and function of mTORC1 complex. This Mus musculus (Mouse) protein is Coiled-coil domain-containing protein 28B (Ccdc28b).